The chain runs to 190 residues: Potassium-transporting ATPase KdpC subunit (190 aa).

The helical transmembrane segment at 11 to 31 (LIVLMSLITGVAYPLVVTGVA) threads the bilayer.

This sequence belongs to the KdpC family. The system is composed of three essential subunits: KdpA, KdpB and KdpC.

It is found in the cell inner membrane. In terms of biological role, part of the high-affinity ATP-driven potassium transport (or Kdp) system, which catalyzes the hydrolysis of ATP coupled with the electrogenic transport of potassium into the cytoplasm. This subunit acts as a catalytic chaperone that increases the ATP-binding affinity of the ATP-hydrolyzing subunit KdpB by the formation of a transient KdpB/KdpC/ATP ternary complex. The chain is Potassium-transporting ATPase KdpC subunit from Pseudomonas syringae pv. tomato (strain ATCC BAA-871 / DC3000).